The following is an 866-amino-acid chain: N-alpha-acetyltransferase 15, NatA auxiliary subunit (866 aa).

4 TPR repeats span residues 46–79, 80–113, 148–184, and 224–257; these read GETL…DLKS, HVCW…DKDN, RASW…SPDK, and LAVE…NPEN. Lysine 262 carries the post-translational modification N6-acetyllysine. Serine 302 carries the post-translational modification Phosphoserine. 3 TPR repeats span residues 374–407, 409–441, and 485–518; these read LWVQ…TPTL, ELFL…DTAD, and MWFQ…FIEI. Residues 500-866 are interaction with HYPK; it reads KFGEALKKCH…AEAEELANEI (367 aa). Phosphoserine is present on residues serine 537 and serine 588. Positions 579 to 594 are enriched in basic and acidic residues; sequence EHEADTANMSDKELKK. Residues 579–642 are disordered; sequence EHEADTANMS…EEIGGPKEEL (64 aa). The span at 595–604 shows a compositional bias: basic residues; sequence LRNKQRRAQK. Positions 606–621 are enriched in basic and acidic residues; that stretch reads AQIEEEKKNAEKEKQQ. Positions 612 to 629 match the Bipartite nuclear localization signal motif; that stretch reads KKNAEKEKQQRNQKKKKD. The stretch at 672–705 is one TPR 8 repeat; that stretch reads IETHLFAFEIYFRKEKFLLMLQSVKRAFAIDSSH. Residues lysine 735 and lysine 756 each carry the N6-acetyllysine modification. Residues serine 855 and serine 856 each carry the phosphoserine modification.

As to quaternary structure, component of the N-terminal acetyltransferase A complex (also called the NatA complex) composed of NAA10 and NAA15. Within the complex interacts with NAA10. Component of the N-terminal acetyltransferase A (NatA)/HYPK complex at least composed of NAA10, NAA15 and HYPK, which has N-terminal acetyltransferase activity. In complex with NAA10, interacts with HYPK. Component of the N-terminal acetyltransferase E (NatE) complex at least composed of NAA10, NAA15 and NAA50. Within the complex interacts with NAA10; the interaction is required for binding to NAA50. Interacts with NAAT50. The interaction of the NatA complex with NAA50 reduces the acetylation activity of the NatA complex. Component of the N-terminal acetyltransferase E (NatE)/HYPK complex at least composed of NAA10, NAA15, NAA50 and HYPK. In complex with NAA10 interacts with HYPK; the interaction with HYPK reduces the capacity of the NatA complex to interact with NAA50. Interacts with NAA11. Interacts with XRCC6 and XRCC5. In terms of processing, cleaved by caspases during apoptosis, resulting in a stable 35 kDa fragment. In terms of tissue distribution, expressed at high levels in testis and in ocular endothelial cells. Also found in brain (corpus callosum), heart, colon, bone marrow and at lower levels in most adult tissues, including thyroid, liver, pancreas, mammary and salivary glands, lung, ovary, urogenital system and upper gastrointestinal tract. Overexpressed in gastric cancer, in papillary thyroid carcinomas and in a Burkitt lymphoma cell line (Daudi). Specifically suppressed in abnormal proliferating blood vessels in eyes of patients with proliferative diabetic retinopathy.

The protein localises to the cytoplasm. Its subcellular location is the nucleus. Its function is as follows. Auxillary subunit of N-terminal acetyltransferase complexes which display alpha (N-terminal) acetyltransferase (NAT) activity. The NAT activity may be important for vascular, hematopoietic and neuronal growth and development. Required to control retinal neovascularization in adult ocular endothelial cells. In complex with XRCC6 and XRCC5 (Ku80), up-regulates transcription from the osteocalcin promoter. This is N-alpha-acetyltransferase 15, NatA auxiliary subunit (NAA15) from Homo sapiens (Human).